We begin with the raw amino-acid sequence, 82 residues long: VPANAVTESDPAAVALKYHRDAASSERVAAARPGLPPEEQHCENCQFMNPDSAAADWKGCQLFPGKLINLSGWCASWTLRAG.

The [4Fe-4S] cluster site is built by Cys42, Cys45, Cys60, and Cys74.

This sequence belongs to the high-potential iron-sulfur protein (HiPIP) family. In terms of assembly, homodimer.

Its subcellular location is the periplasm. Its function is as follows. Specific class of high-redox-potential 4Fe-4S ferredoxins. Functions in anaerobic electron transport in most purple and in some other photosynthetic bacteria and in at least one genus (Paracoccus) of halophilic, denitrifying bacteria. The chain is High-potential iron-sulfur protein (hip) from Marichromatium purpuratum (Chromatium purpuratum).